Reading from the N-terminus, the 521-residue chain is 2,3-bisphosphoglycerate-independent phosphoglycerate mutase (521 aa).

Residues aspartate 18 and serine 68 each coordinate Mn(2+). The active-site Phosphoserine intermediate is the serine 68. Residues histidine 129, arginine 158–aspartate 159, arginine 190, arginine 196, arginine 266–arginine 269, and lysine 343 contribute to the substrate site. Positions 410, 414, 451, 452, and 470 each coordinate Mn(2+).

Belongs to the BPG-independent phosphoglycerate mutase family. In terms of assembly, monomer. It depends on Mn(2+) as a cofactor.

It carries out the reaction (2R)-2-phosphoglycerate = (2R)-3-phosphoglycerate. It participates in carbohydrate degradation; glycolysis; pyruvate from D-glyceraldehyde 3-phosphate: step 3/5. Functionally, catalyzes the interconversion of 2-phosphoglycerate and 3-phosphoglycerate. This is 2,3-bisphosphoglycerate-independent phosphoglycerate mutase from Hydrogenovibrio crunogenus (strain DSM 25203 / XCL-2) (Thiomicrospira crunogena).